The primary structure comprises 463 residues: Argininosuccinate lyase (463 aa).

The protein belongs to the lyase 1 family. Argininosuccinate lyase subfamily.

It is found in the cytoplasm. It carries out the reaction 2-(N(omega)-L-arginino)succinate = fumarate + L-arginine. It participates in amino-acid biosynthesis; L-arginine biosynthesis; L-arginine from L-ornithine and carbamoyl phosphate: step 3/3. In Thermosynechococcus vestitus (strain NIES-2133 / IAM M-273 / BP-1), this protein is Argininosuccinate lyase.